The chain runs to 239 residues: Sugar fermentation stimulation protein homolog (239 aa).

Belongs to the SfsA family.

The chain is Sugar fermentation stimulation protein homolog from Alcanivorax borkumensis (strain ATCC 700651 / DSM 11573 / NCIMB 13689 / SK2).